Here is a 227-residue protein sequence, read N- to C-terminus: MAHPVQLGFQDAASPIMEELLYFHDHTLMIMFLISSLVLYIISLMLTTKLTHTSTMDAQEVETVWTILPAAILILIALPSLRILYMMDEITSPSLTLKTMGHQWYWSYEYTDYENLCFDSYMTPCSDLKPGELRLLEVDNRVVLPTELSIRTLISSEDVLHSWTVPSLGVKTDAIPGRLNQATLMASRPGVYYGQCSEICGANHSFMPIVLELIPLKHFEEWLLFTL.

The Mitochondrial intermembrane segment spans residues 1–14 (MAHPVQLGFQDAAS). The helical transmembrane segment at 15 to 45 (PIMEELLYFHDHTLMIMFLISSLVLYIISLM) threads the bilayer. Topologically, residues 46–59 (LTTKLTHTSTMDAQ) are mitochondrial matrix. A helical membrane pass occupies residues 60 to 87 (EVETVWTILPAAILILIALPSLRILYMM). Residues 88–227 (DEITSPSLTL…HFEEWLLFTL (140 aa)) lie on the Mitochondrial intermembrane side of the membrane. His161, Cys196, Glu198, Cys200, His204, and Met207 together coordinate Cu cation. Glu198 serves as a coordination point for Mg(2+).

It belongs to the cytochrome c oxidase subunit 2 family. As to quaternary structure, component of the cytochrome c oxidase (complex IV, CIV), a multisubunit enzyme composed of 14 subunits. The complex is composed of a catalytic core of 3 subunits MT-CO1, MT-CO2 and MT-CO3, encoded in the mitochondrial DNA, and 11 supernumerary subunits COX4I, COX5A, COX5B, COX6A, COX6B, COX6C, COX7A, COX7B, COX7C, COX8 and NDUFA4, which are encoded in the nuclear genome. The complex exists as a monomer or a dimer and forms supercomplexes (SCs) in the inner mitochondrial membrane with NADH-ubiquinone oxidoreductase (complex I, CI) and ubiquinol-cytochrome c oxidoreductase (cytochrome b-c1 complex, complex III, CIII), resulting in different assemblies (supercomplex SCI(1)III(2)IV(1) and megacomplex MCI(2)III(2)IV(2)). Found in a complex with TMEM177, COA6, COX18, COX20, SCO1 and SCO2. Interacts with TMEM177 in a COX20-dependent manner. Interacts with COX20. Interacts with COX16. Cu cation is required as a cofactor.

The protein resides in the mitochondrion inner membrane. The catalysed reaction is 4 Fe(II)-[cytochrome c] + O2 + 8 H(+)(in) = 4 Fe(III)-[cytochrome c] + 2 H2O + 4 H(+)(out). In terms of biological role, component of the cytochrome c oxidase, the last enzyme in the mitochondrial electron transport chain which drives oxidative phosphorylation. The respiratory chain contains 3 multisubunit complexes succinate dehydrogenase (complex II, CII), ubiquinol-cytochrome c oxidoreductase (cytochrome b-c1 complex, complex III, CIII) and cytochrome c oxidase (complex IV, CIV), that cooperate to transfer electrons derived from NADH and succinate to molecular oxygen, creating an electrochemical gradient over the inner membrane that drives transmembrane transport and the ATP synthase. Cytochrome c oxidase is the component of the respiratory chain that catalyzes the reduction of oxygen to water. Electrons originating from reduced cytochrome c in the intermembrane space (IMS) are transferred via the dinuclear copper A center (CU(A)) of subunit 2 and heme A of subunit 1 to the active site in subunit 1, a binuclear center (BNC) formed by heme A3 and copper B (CU(B)). The BNC reduces molecular oxygen to 2 water molecules using 4 electrons from cytochrome c in the IMS and 4 protons from the mitochondrial matrix. The sequence is that of Cytochrome c oxidase subunit 2 (MT-CO2) from Varecia variegata (Black-and-white ruffed lemur).